The following is a 319-amino-acid chain: Probable deoxyhypusine synthase (319 aa).

Catalysis depends on lysine 287, which acts as the Nucleophile.

This sequence belongs to the deoxyhypusine synthase family. It depends on NAD(+) as a cofactor.

The catalysed reaction is [eIF5A protein]-L-lysine + spermidine = [eIF5A protein]-deoxyhypusine + propane-1,3-diamine. It participates in protein modification; eIF5A hypusination. Catalyzes the NAD-dependent oxidative cleavage of spermidine and the subsequent transfer of the butylamine moiety of spermidine to the epsilon-amino group of a specific lysine residue of the eIF-5A precursor protein to form the intermediate deoxyhypusine residue. The protein is Probable deoxyhypusine synthase of Ignicoccus hospitalis (strain KIN4/I / DSM 18386 / JCM 14125).